Consider the following 253-residue polypeptide: Malonyl-[acyl-carrier protein] O-methyltransferase (253 aa).

It belongs to the methyltransferase superfamily.

The catalysed reaction is malonyl-[ACP] + S-adenosyl-L-methionine = malonyl-[ACP] methyl ester + S-adenosyl-L-homocysteine. It functions in the pathway cofactor biosynthesis; biotin biosynthesis. In terms of biological role, converts the free carboxyl group of a malonyl-thioester to its methyl ester by transfer of a methyl group from S-adenosyl-L-methionine (SAM). It allows to synthesize pimeloyl-ACP via the fatty acid synthetic pathway. The chain is Malonyl-[acyl-carrier protein] O-methyltransferase from Pectobacterium atrosepticum (strain SCRI 1043 / ATCC BAA-672) (Erwinia carotovora subsp. atroseptica).